The following is a 359-amino-acid chain: DNA replication and repair protein RecF (359 aa).

30 to 37 provides a ligand contact to ATP; it reads GQNAQGKT.

It belongs to the RecF family.

It localises to the cytoplasm. Its function is as follows. The RecF protein is involved in DNA metabolism; it is required for DNA replication and normal SOS inducibility. RecF binds preferentially to single-stranded, linear DNA. It also seems to bind ATP. This Lactococcus lactis subsp. cremoris (strain SK11) protein is DNA replication and repair protein RecF.